A 267-amino-acid chain; its full sequence is Phosphatidylglycerol--prolipoprotein diacylglyceryl transferase (267 aa).

Transmembrane regions (helical) follow at residues 21 to 41, 60 to 80, and 95 to 115; these read VSLHWYGIMYLLGFGFAYWLG, LLFNGFWGVVLGGRIGDVFFY, and IWEGGMSFHGGLLGVIVAMLW. Arg-143 is an a 1,2-diacyl-sn-glycero-3-phospho-(1'-sn-glycerol) binding site. The next 2 helical transmembrane spans lie at 203-223 and 240-260; these read GSVAGLFLVGYGVFRFIVEYF and GQLLSLPMIIGGLVIMVVAYY.

It belongs to the Lgt family.

It is found in the cell inner membrane. The enzyme catalyses L-cysteinyl-[prolipoprotein] + a 1,2-diacyl-sn-glycero-3-phospho-(1'-sn-glycerol) = an S-1,2-diacyl-sn-glyceryl-L-cysteinyl-[prolipoprotein] + sn-glycerol 1-phosphate + H(+). It participates in protein modification; lipoprotein biosynthesis (diacylglyceryl transfer). In terms of biological role, catalyzes the transfer of the diacylglyceryl group from phosphatidylglycerol to the sulfhydryl group of the N-terminal cysteine of a prolipoprotein, the first step in the formation of mature lipoproteins. In Glaesserella parasuis serovar 5 (strain SH0165) (Haemophilus parasuis), this protein is Phosphatidylglycerol--prolipoprotein diacylglyceryl transferase.